Consider the following 128-residue polypeptide: MFS18 protein (128 aa).

The N-terminal stretch at 1–25 is a signal peptide; the sequence is MARSSKMMVAARLLALALAVSTAEA. A disordered region spans residues 26-79; it reads RNIKTTTTEKKDDAVVQPQTFPPFDRLGGGASPAFGGLPGGSIPGSSIPGFSMP. Residues 52–68 show a composition bias toward gly residues; sequence LGGGASPAFGGLPGGSI. 11 consecutive repeat copies span residues 64–67, 64–75, 69–72, 69–80, 74–77, 79–82, 81–92, 86–89, 91–94, 104–107, and 113–116. Residues 64 to 92 are 3 X approximate tandem repeats; sequence PGGSIPGSSIPGFSMPGSGSSLPGFSLPG. Residues 64 to 116 are 8 X 4 AA approximate repeats; sequence PGGSIPGSSIPGFSMPGSGSSLPGFSLPGSGTMPLFGGGSPGFSGFGGMPGSP. Low complexity predominate over residues 69-79; the sequence is PGSSIPGFSMP. Gly residues predominate over residues 99 to 113; that stretch reads FGGGSPGFSGFGGMP. A disordered region spans residues 99-128; it reads FGGGSPGFSGFGGMPGSPTAGSVPEHANKP.

As to expression, enhanced expression in male flowers. Accumulates in the glumes and in anther walls, paleas and lemmas of mature florets.

This Zea mays (Maize) protein is MFS18 protein (MFS18).